The following is a 404-amino-acid chain: Odorant receptor 67c (404 aa).

Residues 1–45 lie on the Cytoplasmic side of the membrane; that stretch reads METAKDNTARTFMELMRVPVQFYRTIGEDIYAHRSTNPLKSLLFK. Residues 46–66 form a helical membrane-spanning segment; sequence IYLYAGFINFNLLVIGELVFF. The Extracellular segment spans residues 67–79; sequence YNSIQDFETIRLA. A helical transmembrane segment spans residues 80–100; that stretch reads IAVAPCIGFSLVADFKQAAMI. Topologically, residues 101–139 are cytoplasmic; the sequence is RGKKTLIMLLDDLENMHPKTLAKQMEYKLPDFEKTMKRV. A helical membrane pass occupies residues 140-160; that stretch reads INIFTFLCLAYTTTFSFYPAI. Residues 161–204 lie on the Extracellular side of the membrane; it reads KASVKFNFLGYDTFDRNFGFLIWFPFDATRNNLIYWIMYWDIAH. The chain crosses the membrane as a helical span at residues 205–225; the sequence is GAYLAGIAFLCADLLLVVVIT. Topologically, residues 226–277 are cytoplasmic; it reads QICMHFNYISMRLEDHPCNSNEDKENIEFLIGIIRYHDKCLKLCEHVNDLYS. The helical transmembrane segment at 278 to 298 threads the bilayer; sequence FSLLLNFLMASMQICFIAFQV. Residues 299–304 lie on the Extracellular side of the membrane; it reads TESTVE. The chain crosses the membrane as a helical span at residues 305 to 326; that stretch reads VIIIYCIFLMTSMVQVFMVCYY. The Cytoplasmic portion of the chain corresponds to 327 to 373; it reads GDTLIAASLKVGDAAYNQKWFQCSKSYCTMLKLLIMRSQKPASIRPP. The chain crosses the membrane as a helical span at residues 374–394; sequence TFPPISLVTYMKVISMSYQFF. Over 395–404 the chain is Extracellular; it reads ALLRTTYSNN.

Belongs to the insect chemoreceptor superfamily. Heteromeric odorant receptor channel (TC 1.A.69) family. Or49a subfamily. In terms of assembly, interacts with Orco. Complexes exist early in the endomembrane system in olfactory sensory neurons (OSNs), coupling these complexes to the conserved ciliary trafficking pathway. Expressed in olfactory sensory neurons in the antenna.

It localises to the cell membrane. Functionally, odorant receptor which mediates acceptance or avoidance behavior, depending on its substrates. The odorant receptor repertoire encodes a large collection of odor stimuli that vary widely in identity, intensity, and duration. May form a complex with Orco to form odorant-sensing units, providing sensitive and prolonged odorant signaling and calcium permeability. This chain is Odorant receptor 67c (Or67c), found in Drosophila melanogaster (Fruit fly).